The chain runs to 411 residues: S-adenosylmethionine synthase (411 aa).

H15 lines the ATP pocket. D17 is a binding site for Mg(2+). E43 provides a ligand contact to K(+). L-methionine is bound by residues E56 and Q99. The segment at 99–109 is flexible loop; that stretch reads QSQEIAQGVDT. Residues 179–181, D260, 266–267, A283, and K287 contribute to the ATP site; these read DGK and RK. Residue D260 coordinates L-methionine. K291 contributes to the L-methionine binding site.

This sequence belongs to the AdoMet synthase family. As to quaternary structure, homotetramer; dimer of dimers. Mg(2+) is required as a cofactor. K(+) serves as cofactor.

It localises to the cytoplasm. The enzyme catalyses L-methionine + ATP + H2O = S-adenosyl-L-methionine + phosphate + diphosphate. It participates in amino-acid biosynthesis; S-adenosyl-L-methionine biosynthesis; S-adenosyl-L-methionine from L-methionine: step 1/1. Catalyzes the formation of S-adenosylmethionine (AdoMet) from methionine and ATP. The overall synthetic reaction is composed of two sequential steps, AdoMet formation and the subsequent tripolyphosphate hydrolysis which occurs prior to release of AdoMet from the enzyme. The protein is S-adenosylmethionine synthase of Corynebacterium jeikeium (strain K411).